The primary structure comprises 97 residues: Large ribosomal subunit protein eL21 (97 aa).

Belongs to the eukaryotic ribosomal protein eL21 family.

The sequence is that of Large ribosomal subunit protein eL21 from Methanosarcina barkeri (strain Fusaro / DSM 804).